Here is a 405-residue protein sequence, read N- to C-terminus: S-adenosylmethionine synthase (405 aa).

Residue His-19 participates in ATP binding. Asp-21 is a binding site for Mg(2+). Residue Glu-47 coordinates K(+). The L-methionine site is built by Glu-60 and Gln-103. Residues 103–113 form a flexible loop region; it reads QSADIAQGVDK. ATP contacts are provided by residues 179–181, 246–247, Asp-255, 261–262, Ala-278, and Lys-282; these read DGK, RF, and RK. Position 255 (Asp-255) interacts with L-methionine. Lys-286 is an L-methionine binding site.

This sequence belongs to the AdoMet synthase family. As to quaternary structure, homotetramer; dimer of dimers. Mg(2+) serves as cofactor. K(+) is required as a cofactor.

It is found in the cytoplasm. The enzyme catalyses L-methionine + ATP + H2O = S-adenosyl-L-methionine + phosphate + diphosphate. Its pathway is amino-acid biosynthesis; S-adenosyl-L-methionine biosynthesis; S-adenosyl-L-methionine from L-methionine: step 1/1. In terms of biological role, catalyzes the formation of S-adenosylmethionine (AdoMet) from methionine and ATP. The overall synthetic reaction is composed of two sequential steps, AdoMet formation and the subsequent tripolyphosphate hydrolysis which occurs prior to release of AdoMet from the enzyme. The sequence is that of S-adenosylmethionine synthase from Shouchella clausii (strain KSM-K16) (Alkalihalobacillus clausii).